Here is a 140-residue protein sequence, read N- to C-terminus: MASPLRSLMLLLAVLAVAWAGTSRPPPRLLGAPQEADASEEGVQRALDFAVSEYNKGSNDAYHSRAIQVVRARKQLVAGINYYLDVEMGRTTCTKSQTNLTNCPFHDQPHLMRKALCSFQIYSVPWKGTHTLTKSSCKNA.

A signal peptide spans 1 to 20; sequence MASPLRSLMLLLAVLAVAWA. Positions 75–79 match the Secondary area of contact motif; it reads QLVAG. 2 cysteine pairs are disulfide-bonded: Cys93/Cys103 and Cys117/Cys137. Asn99 carries an N-linked (GlcNAc...) asparagine glycan.

This sequence belongs to the cystatin family.

The protein localises to the secreted. Its function is as follows. As an inhibitor of cysteine proteinases, this protein is thought to serve an important physiological role as a local regulator of this enzyme activity. Known to inhibit cathepsin B, H, and L. In Rattus norvegicus (Rat), this protein is Cystatin-C (Cst3).